The following is a 510-amino-acid chain: Pantetheinase (510 aa).

The first 22 residues, 1 to 22 (MIMSQLLNYVAVLFFCVSRASS), serve as a signal peptide directing secretion. In terms of domain architecture, CN hydrolase spans 31 to 307 (YEHAVILPNA…GKLLLAQLDS (277 aa)). Asn39 is a glycosylation site (N-linked (GlcNAc...) asparagine). Residue Glu80 is the Proton acceptor of the active site. N-linked (GlcNAc...) asparagine glycosylation is found at Asn87 and Asn147. Lys179 acts as the Proton donor in catalysis. N-linked (GlcNAc...) asparagine glycosylation occurs at Asn201. The active-site Nucleophile is Cys212. 2 N-linked (GlcNAc...) asparagine glycosylation sites follow: Asn316 and Asn354. The GPI-anchor amidated aspartate moiety is linked to residue Asp492. A propeptide spans 493–510 (LTTQALRLNPKTDAWKSK) (removed in mature form). A glycan (O-linked (GalNAc...) threonine) is linked at Thr504.

The protein belongs to the carbon-nitrogen hydrolase superfamily. BTD/VNN family. In terms of assembly, monomer.

It is found in the cell membrane. It carries out the reaction (R)-pantetheine + H2O = cysteamine + (R)-pantothenate. Its function is as follows. Amidohydrolase that hydrolyzes specifically one of the carboamide linkages in D-pantetheine thus recycling pantothenic acid (vitamin B5) and releasing cysteamine. The protein is Pantetheinase (VNN1) of Bos taurus (Bovine).